Consider the following 849-residue polypeptide: Disks large homolog 3 (849 aa).

The tract at residues 32–101 is disordered; it reads DWQVPDPYGP…GKSTPKLNGS (70 aa). Positions 41-53 are enriched in gly residues; that stretch reads PSGGNGASSGYGG. Over residues 57 to 69 the composition is skewed to polar residues; the sequence is QTLPSQAGATPTP. 3 PDZ domains span residues 149-235, 244-330, and 404-484; these read EIVL…VRRR, EVNL…VAKP, and KIIL…AQYR. The residue at position 157 (S157) is a Phosphoserine. Residues 519–589 enclose the SH3 domain; that stretch reads KRSLYVRALF…PSKKRVEKKE (71 aa). Residues 659 to 834 form the Guanylate kinase-like domain; sequence ARPVIILGPM…IYNKIKQIIE (176 aa). Y705 is subject to Phosphotyrosine.

Belongs to the MAGUK family. As to quaternary structure, interacts through its PDZ domains with NETO1, GRIN2B, SYNGAP1 and APC. Interacts through its first two PDZ domains with ERBB4. Interacts through its third PDZ domain with NLGN1, and probably with NLGN2 and NLGN3. Interacts through its guanylate kinase-like domain with DLGAP1, DLGAP2, DLGAP3 and DLGAP4. Interacts with FRMPD4 (via C-terminus). Interacts with LRFN1, LRFN2 and LRFN4. Interacts with FLTP. Interacts with GPR85. Interacts with DGKI (via PDZ-binding motif).

In terms of biological role, required for learning most likely through its role in synaptic plasticity following NMDA receptor signaling. In Mus musculus (Mouse), this protein is Disks large homolog 3 (Dlg3).